Here is a 290-residue protein sequence, read N- to C-terminus: Non-homologous end joining protein Ku (290 aa).

Residues 11–183 enclose the Ku domain; the sequence is TFGLISMPVR…EAPKITSEVK (173 aa). Residues 253-290 are disordered; the sequence is MKDQKKGSRLAEVDKESTVQMTPKKPAVKERRGRKRVA. The span at 254-269 shows a compositional bias: basic and acidic residues; that stretch reads KDQKKGSRLAEVDKES.

It belongs to the prokaryotic Ku family. Homodimer. Interacts with LigD.

With LigD forms a non-homologous end joining (NHEJ) DNA repair enzyme, which repairs dsDNA breaks with reduced fidelity. Binds linear dsDNA with 5'- and 3'- overhangs but not closed circular dsDNA nor ssDNA. Recruits and stimulates the ligase activity of LigD. The polypeptide is Non-homologous end joining protein Ku (Koribacter versatilis (strain Ellin345)).